A 529-amino-acid polypeptide reads, in one-letter code: Bifunctional purine biosynthesis protein PurH (529 aa).

Positions 2–149 (TNLVPVGRAL…KNHRFVNVVT (148 aa)) constitute an MGS-like domain.

It belongs to the PurH family.

The enzyme catalyses (6R)-10-formyltetrahydrofolate + 5-amino-1-(5-phospho-beta-D-ribosyl)imidazole-4-carboxamide = 5-formamido-1-(5-phospho-D-ribosyl)imidazole-4-carboxamide + (6S)-5,6,7,8-tetrahydrofolate. It carries out the reaction IMP + H2O = 5-formamido-1-(5-phospho-D-ribosyl)imidazole-4-carboxamide. The protein operates within purine metabolism; IMP biosynthesis via de novo pathway; 5-formamido-1-(5-phospho-D-ribosyl)imidazole-4-carboxamide from 5-amino-1-(5-phospho-D-ribosyl)imidazole-4-carboxamide (10-formyl THF route): step 1/1. It participates in purine metabolism; IMP biosynthesis via de novo pathway; IMP from 5-formamido-1-(5-phospho-D-ribosyl)imidazole-4-carboxamide: step 1/1. This Cereibacter sphaeroides (strain ATCC 17025 / ATH 2.4.3) (Rhodobacter sphaeroides) protein is Bifunctional purine biosynthesis protein PurH.